The primary structure comprises 299 residues: Zinc finger protein 414 (299 aa).

Polar residues-rich tracts occupy residues 1–20 and 70–80; these read MEEL…SSSN and SCQTSSTTRGV. The interval 1-102 is disordered; sequence MEELSGPSSD…PPPGKQIPCS (102 aa). C2H2-type zinc fingers lie at residues 99–123 and 135–159; these read IPCS…LRTH and FRCS…GKLH. Residues 166 to 190 form a C2H2-type 3; degenerate zinc finger; the sequence is FKCENCLLRFRTHRSLFKHLHVCID. Disordered regions lie at residues 193–228 and 254–299; these read QNPA…PFPL and PRLR…GACR. Residues 203-215 are compositionally biased toward basic and acidic residues; sequence LDKEPPVPERPPE. Over residues 217 to 228 the composition is skewed to low complexity; sequence DPSSSLGLPFPL. Polar residues predominate over residues 268-285; the sequence is TSSTAIWKKSQGATSSPR.

Belongs to the krueppel C2H2-type zinc-finger protein family.

The protein localises to the nucleus. In terms of biological role, may be involved in transcriptional regulation. In Rattus norvegicus (Rat), this protein is Zinc finger protein 414 (Znf414).